A 1877-amino-acid chain; its full sequence is Protein TIC 214 (1877 aa).

Helical transmembrane passes span 18 to 38 (IINS…FSVG), 64 to 84 (FITG…HLAL), 87 to 107 (PHTI…WKNH), 124 to 144 (LSIQ…HFIL), 172 to 192 (VGWL…LFWI), and 221 to 241 (IFRI…PSPI). Disordered regions lie at residues 246 to 313 (LKET…GKEK), 644 to 695 (DDFE…NSDR), and 774 to 795 (PEFK…QKKE). Composition is skewed to acidic residues over residues 251-268 (ETEE…EIET), 281-304 (GSTE…DETE), and 645-659 (DFEE…ESTE). Positions 685–695 (TSTKDTTNSDR) are enriched in basic and acidic residues.

This sequence belongs to the TIC214 family. In terms of assembly, part of the Tic complex.

It localises to the plastid. It is found in the chloroplast inner membrane. Its function is as follows. Involved in protein precursor import into chloroplasts. May be part of an intermediate translocation complex acting as a protein-conducting channel at the inner envelope. In Chloranthus spicatus (Chulantree), this protein is Protein TIC 214.